The primary structure comprises 172 residues: Translation initiation factor IF-3 (172 aa).

Belongs to the IF-3 family. As to quaternary structure, monomer.

It is found in the cytoplasm. Its function is as follows. IF-3 binds to the 30S ribosomal subunit and shifts the equilibrium between 70S ribosomes and their 50S and 30S subunits in favor of the free subunits, thus enhancing the availability of 30S subunits on which protein synthesis initiation begins. This chain is Translation initiation factor IF-3, found in Campylobacter jejuni subsp. doylei (strain ATCC BAA-1458 / RM4099 / 269.97).